Reading from the N-terminus, the 162-residue chain is B-box zinc finger protein 23 (162 aa).

Cys5, Cys8, Cys28, His33, Cys63, Cys66, Cys86, and His91 together coordinate Zn(2+). The B box-type 1; atypical zinc finger occupies 5 to 47 (CEVCEKAEAEVLCCSDEAVLCKPCDIKVHEANKLFQRHHRVAL). The B box-type 2; atypical zinc finger occupies 63–101 (CDICQERKGYFFCLEDRAMLCNDCDEAIHTCNSHQRFLL). The segment at 137–162 (QYSSEETEAGNSGEIVHKNPSVILSP) is disordered.

The protein resides in the nucleus. Its function is as follows. Probable transcription factor that may be involved in seedling photomorphogenesis. In Arabidopsis thaliana (Mouse-ear cress), this protein is B-box zinc finger protein 23.